A 178-amino-acid chain; its full sequence is Alkyl hydroperoxide reductase AhpD (178 aa).

Cys-130 acts as the Proton donor in catalysis. Cys-130 and Cys-133 form a disulfide bridge. The active-site Cysteine sulfenic acid (-SOH) intermediate is the Cys-133.

It belongs to the AhpD family. As to quaternary structure, homotrimer.

The enzyme catalyses N(6)-[(R)-dihydrolipoyl]-L-lysyl-[lipoyl-carrier protein] + a hydroperoxide = N(6)-[(R)-lipoyl]-L-lysyl-[lipoyl-carrier protein] + an alcohol + H2O. Its function is as follows. Antioxidant protein with alkyl hydroperoxidase activity. Required for the reduction of the AhpC active site cysteine residues and for the regeneration of the AhpC enzyme activity. The chain is Alkyl hydroperoxide reductase AhpD from Mycolicibacterium paratuberculosis (strain ATCC BAA-968 / K-10) (Mycobacterium paratuberculosis).